The sequence spans 187 residues: UPF0301 protein Cpha266_0885 (187 aa).

Belongs to the UPF0301 (AlgH) family.

The polypeptide is UPF0301 protein Cpha266_0885 (Chlorobium phaeobacteroides (strain DSM 266 / SMG 266 / 2430)).